The chain runs to 196 residues: NAD(P)H-quinone oxidoreductase subunit I (196 aa).

4Fe-4S ferredoxin-type domains are found at residues 54–83 (GRIH…VDWV) and 94–123 (KHYS…VTEE). C63, C66, C69, C73, C103, C106, C109, and C113 together coordinate [4Fe-4S] cluster. Positions 174-196 (PAGAQRAGERPEAIANTAKSSEN) are disordered.

The protein belongs to the complex I 23 kDa subunit family. In terms of assembly, NDH-1 is composed of at least 11 different subunits. [4Fe-4S] cluster serves as cofactor.

It is found in the cellular thylakoid membrane. It catalyses the reaction a plastoquinone + NADH + (n+1) H(+)(in) = a plastoquinol + NAD(+) + n H(+)(out). The enzyme catalyses a plastoquinone + NADPH + (n+1) H(+)(in) = a plastoquinol + NADP(+) + n H(+)(out). In terms of biological role, NDH-1 shuttles electrons from an unknown electron donor, via FMN and iron-sulfur (Fe-S) centers, to quinones in the respiratory and/or the photosynthetic chain. The immediate electron acceptor for the enzyme in this species is believed to be plastoquinone. Couples the redox reaction to proton translocation, and thus conserves the redox energy in a proton gradient. The polypeptide is NAD(P)H-quinone oxidoreductase subunit I (Thermosynechococcus vestitus (strain NIES-2133 / IAM M-273 / BP-1)).